Reading from the N-terminus, the 634-residue chain is Kelch-like protein 22 (634 aa).

A2 is subject to N-acetylalanine. Residues 50 to 117 enclose the BTB domain; sequence FDVVLVVEGK…IYTSELELSL (68 aa). Kelch repeat units follow at residues 299 to 349, 350 to 399, 400 to 446, 448 to 493, 495 to 544, and 545 to 593; these read CVVG…VLNN, FVYL…VVGK, YIYA…TLQG, MYIT…ALLD, LFVI…VLDS, and RIYV…VLTL. Phosphothreonine is present on T463. Y466 carries the post-translational modification Phosphotyrosine. T475 carries the phosphothreonine modification. The segment at 600 to 634 is disordered; it reads EQPRGTPNRSQADADFASEVMSVSDWEEFDNSSED. T605 carries the phosphothreonine modification. The segment covering 624-634 has biased composition (acidic residues); the sequence is DWEEFDNSSED.

As to quaternary structure, component of the BCR(KLHL22) E3 ubiquitin ligase complex, at least composed of CUL3, KLHL22 and RBX1. Interacts with PLK1. Interacts with DEPDC5 (via DEP domain); the interaction depends on amino acid availability. Interacts with YWHAE; required for the nuclear localization of KLHL22 upon amino acid starvation.

It is found in the cytoplasm. The protein resides in the cytosol. It localises to the cytoskeleton. Its subcellular location is the microtubule organizing center. The protein localises to the centrosome. It is found in the spindle. The protein resides in the nucleus. It localises to the lysosome. Its pathway is protein modification; protein ubiquitination. Its function is as follows. Substrate-specific adapter of a BCR (BTB-CUL3-RBX1) E3 ubiquitin ligase complex required for chromosome alignment and localization of PLK1 at kinetochores. The BCR(KLHL22) ubiquitin ligase complex mediates monoubiquitination of PLK1, leading to PLK1 dissociation from phosphoreceptor proteins and subsequent removal from kinetochores, allowing silencing of the spindle assembly checkpoint (SAC) and chromosome segregation. Monoubiquitination of PLK1 does not lead to PLK1 degradation. The BCR(KLHL22) ubiquitin ligase complex is also responsible for the amino acid-stimulated 'Lys-48' polyubiquitination and proteasomal degradation of DEPDC5. Through the degradation of DEPDC5, releases the GATOR1 complex-mediated inhibition of the TORC1 pathway. It is therefore an amino acid-dependent activator within the amino acid-sensing branch of the TORC1 pathway, indirectly regulating different cellular processes including cell growth and autophagy. The polypeptide is Kelch-like protein 22 (Mus musculus (Mouse)).